A 484-amino-acid polypeptide reads, in one-letter code: Glutamate--tRNA ligase (484 aa).

The 'HIGH' region motif lies at 12 to 22 (PSPTGEPHVGT). A 'KMSKS' region motif is present at residues 253–257 (KLSKR). K256 provides a ligand contact to ATP.

The protein belongs to the class-I aminoacyl-tRNA synthetase family. Glutamate--tRNA ligase type 1 subfamily. As to quaternary structure, monomer.

The protein localises to the cytoplasm. The enzyme catalyses tRNA(Glu) + L-glutamate + ATP = L-glutamyl-tRNA(Glu) + AMP + diphosphate. Its function is as follows. Catalyzes the attachment of glutamate to tRNA(Glu) in a two-step reaction: glutamate is first activated by ATP to form Glu-AMP and then transferred to the acceptor end of tRNA(Glu). This chain is Glutamate--tRNA ligase, found in Rhizobium etli (strain CIAT 652).